The following is a 159-amino-acid chain: Transcription antitermination protein NusB (159 aa).

A disordered region spans residues 1 to 20 (MNKNTQGKPSGKPVRRDGVD).

It belongs to the NusB family.

In terms of biological role, involved in transcription antitermination. Required for transcription of ribosomal RNA (rRNA) genes. Binds specifically to the boxA antiterminator sequence of the ribosomal RNA (rrn) operons. The polypeptide is Transcription antitermination protein NusB (Stenotrophomonas maltophilia (strain R551-3)).